The primary structure comprises 200 residues: Interferon lambda-2 (200 aa).

The N-terminal stretch at M1 to A25 is a signal peptide.

It belongs to the lambda interferon family.

The protein localises to the secreted. In terms of biological role, cytokine with antiviral, antitumour and immunomodulatory activities. Plays a critical role in the antiviral host defense, predominantly in the epithelial tissues. Acts as a ligand for the heterodimeric class II cytokine receptor composed of IL10RB and IFNLR1, and receptor engagement leads to the activation of the JAK/STAT signaling pathway resulting in the expression of IFN-stimulated genes (ISG), which mediate the antiviral state. Has a restricted receptor distribution and therefore restricted targets: is primarily active in epithelial cells and this cell type-selective action is because of the epithelial cell-specific expression of its receptor IFNLR1. Seems not to be essential for early virus-activated host defense in vaginal infection, but plays an important role in Toll-like receptor (TLR)-induced antiviral defense. Plays a significant role in the antiviral immune defense in the intestinal epithelium. Exerts an immunomodulatory effect by up-regulating MHC class I antigen expression. In Homo sapiens (Human), this protein is Interferon lambda-2 (IFNL2).